Here is a 109-residue protein sequence, read N- to C-terminus: Nucleoid-associated protein Psyc_0793 (109 aa).

The protein belongs to the YbaB/EbfC family. As to quaternary structure, homodimer.

It is found in the cytoplasm. The protein resides in the nucleoid. Its function is as follows. Binds to DNA and alters its conformation. May be involved in regulation of gene expression, nucleoid organization and DNA protection. This chain is Nucleoid-associated protein Psyc_0793, found in Psychrobacter arcticus (strain DSM 17307 / VKM B-2377 / 273-4).